We begin with the raw amino-acid sequence, 643 residues long: Rhophilin-1 (643 aa).

The disordered stretch occupies residues 1–43; sequence MILEERPDGQGTGEESSRPQDDGSIRKGYGSFVQNQPGQLQSH. A compositionally biased stretch (basic and acidic residues) spans 15-25; the sequence is ESSRPQDDGSI. Residues 30–104 enclose the REM-1 domain; that stretch reads GSFVQNQPGQ…LAELSTSVDV (75 aa). Ser-31 carries the post-translational modification Phosphoserine. A compositionally biased stretch (polar residues) spans 32–42; the sequence is FVQNQPGQLQS. One can recognise a BRO1 domain in the interval 115 to 462; it reads PMIPLGLKET…LAKYSQLERE (348 aa). The 78-residue stretch at 500-577 folds into the PDZ domain; the sequence is PVHMTRGEGS…EGVSLQVVSL (78 aa).

This sequence belongs to the RHPN family. Binds specifically to GTP-Rho. Interacts with ROPN1. Highly expressed in testis.

Has no enzymatic activity. May serve as a target for Rho, and interact with some cytoskeletal component upon Rho binding or relay a Rho signal to other molecules. The polypeptide is Rhophilin-1 (Rhpn1) (Mus musculus (Mouse)).